The following is a 67-amino-acid chain: UPF0434 protein Lcho_2556 (67 aa).

It belongs to the UPF0434 family.

This Leptothrix cholodnii (strain ATCC 51168 / LMG 8142 / SP-6) (Leptothrix discophora (strain SP-6)) protein is UPF0434 protein Lcho_2556.